The primary structure comprises 173 residues: ATP synthase subunit b (173 aa).

Residues 25–45 (LINLVIVIGVLYWFLKGFLGG) traverse the membrane as a helical segment.

The protein belongs to the ATPase B chain family. F-type ATPases have 2 components, F(1) - the catalytic core - and F(0) - the membrane proton channel. F(1) has five subunits: alpha(3), beta(3), gamma(1), delta(1), epsilon(1). F(0) has four main subunits: a(1), b(1), b'(1) and c(10-14). The alpha and beta chains form an alternating ring which encloses part of the gamma chain. F(1) is attached to F(0) by a central stalk formed by the gamma and epsilon chains, while a peripheral stalk is formed by the delta, b and b' chains.

The protein localises to the cellular thylakoid membrane. Functionally, f(1)F(0) ATP synthase produces ATP from ADP in the presence of a proton or sodium gradient. F-type ATPases consist of two structural domains, F(1) containing the extramembraneous catalytic core and F(0) containing the membrane proton channel, linked together by a central stalk and a peripheral stalk. During catalysis, ATP synthesis in the catalytic domain of F(1) is coupled via a rotary mechanism of the central stalk subunits to proton translocation. Its function is as follows. Component of the F(0) channel, it forms part of the peripheral stalk, linking F(1) to F(0). This is ATP synthase subunit b from Synechococcus sp. (strain CC9311).